Here is a 425-residue protein sequence, read N- to C-terminus: Dual-specificity RNA methyltransferase RlmN (425 aa).

Catalysis depends on Glu136, which acts as the Proton acceptor. Residues Gly142–Leu389 form the Radical SAM core domain. Residues Cys149 and Cys392 are joined by a disulfide bond. [4Fe-4S] cluster-binding residues include Cys156, Cys160, and Cys163. S-adenosyl-L-methionine-binding positions include Gly218–Glu219, Ser250, Ser272–His274, and Asn349. Residue Cys392 is the S-methylcysteine intermediate of the active site.

The protein belongs to the radical SAM superfamily. RlmN family. The cofactor is [4Fe-4S] cluster.

Its subcellular location is the cytoplasm. It carries out the reaction adenosine(2503) in 23S rRNA + 2 reduced [2Fe-2S]-[ferredoxin] + 2 S-adenosyl-L-methionine = 2-methyladenosine(2503) in 23S rRNA + 5'-deoxyadenosine + L-methionine + 2 oxidized [2Fe-2S]-[ferredoxin] + S-adenosyl-L-homocysteine. The enzyme catalyses adenosine(37) in tRNA + 2 reduced [2Fe-2S]-[ferredoxin] + 2 S-adenosyl-L-methionine = 2-methyladenosine(37) in tRNA + 5'-deoxyadenosine + L-methionine + 2 oxidized [2Fe-2S]-[ferredoxin] + S-adenosyl-L-homocysteine. Specifically methylates position 2 of adenine 2503 in 23S rRNA and position 2 of adenine 37 in tRNAs. m2A2503 modification seems to play a crucial role in the proofreading step occurring at the peptidyl transferase center and thus would serve to optimize ribosomal fidelity. In Methylorubrum populi (strain ATCC BAA-705 / NCIMB 13946 / BJ001) (Methylobacterium populi), this protein is Dual-specificity RNA methyltransferase RlmN.